Reading from the N-terminus, the 372-residue chain is Peptidyl-prolyl cis-trans isomerase D (372 aa).

Residues 14 to 178 (YFDISIGGKS…KEALIVDCGE (165 aa)) form the PPIase cyclophilin-type domain. TPR repeat units lie at residues 219 to 252 (AKASKDYGNTAFKSGNYSLGLDKYQKGLRYINEE), 271 to 304 (FSLNNNSALLNIKLEAWDDAARSASAALEVGGVK), and 309 to 342 (AKAFYRRGLANIHLKDEEAAVRDLTEANKLAPND).

The protein belongs to the cyclophilin-type PPIase family. PPIase D subfamily.

It is found in the cytoplasm. It carries out the reaction [protein]-peptidylproline (omega=180) = [protein]-peptidylproline (omega=0). Its function is as follows. PPIases accelerate the folding of proteins. It catalyzes the cis-trans isomerization of proline imidic peptide bonds in oligopeptides. The protein is Peptidyl-prolyl cis-trans isomerase D (CPR6) of Gibberella zeae (strain ATCC MYA-4620 / CBS 123657 / FGSC 9075 / NRRL 31084 / PH-1) (Wheat head blight fungus).